Consider the following 179-residue polypeptide: Acireductone dioxygenase (179 aa).

Positions 85, 87, 91, and 132 each coordinate Fe(2+). The Ni(2+) site is built by histidine 85, histidine 87, glutamate 91, and histidine 132.

This sequence belongs to the acireductone dioxygenase (ARD) family. Fe(2+) serves as cofactor. The cofactor is Ni(2+).

Its subcellular location is the cytoplasm. It is found in the nucleus. It carries out the reaction 1,2-dihydroxy-5-(methylsulfanyl)pent-1-en-3-one + O2 = 4-methylsulfanyl-2-oxobutanoate + formate + 2 H(+). It catalyses the reaction 1,2-dihydroxy-5-(methylsulfanyl)pent-1-en-3-one + O2 = 3-(methylsulfanyl)propanoate + CO + formate + 2 H(+). It participates in amino-acid biosynthesis; L-methionine biosynthesis via salvage pathway; L-methionine from S-methyl-5-thio-alpha-D-ribose 1-phosphate: step 5/6. Functionally, catalyzes 2 different reactions between oxygen and the acireductone 1,2-dihydroxy-3-keto-5-methylthiopentene (DHK-MTPene) depending upon the metal bound in the active site. Fe-containing acireductone dioxygenase (Fe-ARD) produces formate and 2-keto-4-methylthiobutyrate (KMTB), the alpha-ketoacid precursor of methionine in the methionine recycle pathway. Ni-containing acireductone dioxygenase (Ni-ARD) produces methylthiopropionate, carbon monoxide and formate, and does not lie on the methionine recycle pathway. This chain is Acireductone dioxygenase, found in Saccharomyces cerevisiae (strain ATCC 204508 / S288c) (Baker's yeast).